We begin with the raw amino-acid sequence, 606 residues long: NADH-ubiquinone oxidoreductase chain 5 (606 aa).

Transmembrane regions (helical) follow at residues 3-23 (VINL…LPIT), 38-58 (ITKM…LLFL), 87-107 (FFSL…MEFS), 124-144 (LLLF…LQLF), 180-200 (IGDM…NSWE), 216-236 (LLGL…HPWL), 244-264 (TPVS…FTLI), 276-296 (IQTS…ICAL), 304-323 (IIAL…IGIN), 328-350 (AFTH…GSII), 369-389 (MPIT…MPFL), 404-424 (MSYI…MTAS), 460-480 (LILG…PHTT), 483-503 (MTMP…GFTV), and 586-606 (LMKL…LITL).

This sequence belongs to the complex I subunit 5 family. Core subunit of respiratory chain NADH dehydrogenase (Complex I) which is composed of 45 different subunits.

The protein localises to the mitochondrion inner membrane. The enzyme catalyses a ubiquinone + NADH + 5 H(+)(in) = a ubiquinol + NAD(+) + 4 H(+)(out). In terms of biological role, core subunit of the mitochondrial membrane respiratory chain NADH dehydrogenase (Complex I) which catalyzes electron transfer from NADH through the respiratory chain, using ubiquinone as an electron acceptor. Essential for the catalytic activity and assembly of complex I. This chain is NADH-ubiquinone oxidoreductase chain 5 (MT-ND5), found in Elephas maximus (Indian elephant).